Here is a 447-residue protein sequence, read N- to C-terminus: GTPase Der (447 aa).

EngA-type G domains are found at residues 4 to 165 (QIIT…PEEE) and 180 to 357 (LQIV…KIWN). GTP-binding positions include 10 to 17 (GRPNVGKS), 57 to 61 (DTPGL), 119 to 122 (NKCE), 186 to 193 (GRPNAGKS), 233 to 237 (DTAGL), and 298 to 301 (NKWD). The KH-like domain occupies 358–443 (KKITTSKLNE…PIRFTYVKTK (86 aa)).

The protein belongs to the TRAFAC class TrmE-Era-EngA-EngB-Septin-like GTPase superfamily. EngA (Der) GTPase family. In terms of assembly, associates with the 50S ribosomal subunit.

Functionally, GTPase that plays an essential role in the late steps of ribosome biogenesis. The polypeptide is GTPase Der (Rickettsia rickettsii (strain Sheila Smith)).